A 277-amino-acid chain; its full sequence is 4-hydroxybenzoate octaprenyltransferase (277 aa).

Helical transmembrane passes span Phe-24 to Ile-44, Val-81 to Leu-101, Asn-102 to Met-122, Pro-129 to Ile-149, Leu-152 to Thr-172, Ile-201 to Glu-221, Ile-224 to Thr-244, and Ala-255 to Tyr-275.

This sequence belongs to the UbiA prenyltransferase family. The cofactor is Mg(2+).

It is found in the cell inner membrane. The catalysed reaction is all-trans-octaprenyl diphosphate + 4-hydroxybenzoate = 4-hydroxy-3-(all-trans-octaprenyl)benzoate + diphosphate. It functions in the pathway cofactor biosynthesis; ubiquinone biosynthesis. Functionally, catalyzes the prenylation of para-hydroxybenzoate (PHB) with an all-trans polyprenyl group. Mediates the second step in the final reaction sequence of ubiquinone-8 (UQ-8) biosynthesis, which is the condensation of the polyisoprenoid side chain with PHB, generating the first membrane-bound Q intermediate 3-octaprenyl-4-hydroxybenzoate. The chain is 4-hydroxybenzoate octaprenyltransferase from Haemophilus ducreyi (strain 35000HP / ATCC 700724).